Consider the following 316-residue polypeptide: Beta-ketoacyl-[acyl-carrier-protein] synthase III 4 (316 aa).

Residues cysteine 114 and histidine 242 contribute to the active site. The ACP-binding stretch occupies residues 243 to 247 (QANLR). The active site involves asparagine 272.

This sequence belongs to the thiolase-like superfamily. FabH family. As to quaternary structure, homodimer.

It is found in the cytoplasm. It carries out the reaction malonyl-[ACP] + acetyl-CoA + H(+) = 3-oxobutanoyl-[ACP] + CO2 + CoA. Its pathway is lipid metabolism; fatty acid biosynthesis. Its function is as follows. Catalyzes the condensation reaction of fatty acid synthesis by the addition to an acyl acceptor of two carbons from malonyl-ACP. Catalyzes the first condensation reaction which initiates fatty acid synthesis and may therefore play a role in governing the total rate of fatty acid production. Possesses both acetoacetyl-ACP synthase and acetyl transacylase activities. Its substrate specificity determines the biosynthesis of branched-chain and/or straight-chain of fatty acids. In Streptomyces coelicolor (strain ATCC BAA-471 / A3(2) / M145), this protein is Beta-ketoacyl-[acyl-carrier-protein] synthase III 4.